A 248-amino-acid chain; its full sequence is DNA repair protein RecO (248 aa).

Belongs to the RecO family.

In terms of biological role, involved in DNA repair and RecF pathway recombination. This Bacillus cereus (strain 03BB102) protein is DNA repair protein RecO.